Consider the following 479-residue polypeptide: Glutamyl-tRNA(Gln) amidotransferase subunit A (479 aa).

Active-site charge relay system residues include lysine 74 and serine 149. Serine 173 serves as the catalytic Acyl-ester intermediate.

This sequence belongs to the amidase family. GatA subfamily. As to quaternary structure, heterotrimer of A, B and C subunits.

The catalysed reaction is L-glutamyl-tRNA(Gln) + L-glutamine + ATP + H2O = L-glutaminyl-tRNA(Gln) + L-glutamate + ADP + phosphate + H(+). Functionally, allows the formation of correctly charged Gln-tRNA(Gln) through the transamidation of misacylated Glu-tRNA(Gln) in organisms which lack glutaminyl-tRNA synthetase. The reaction takes place in the presence of glutamine and ATP through an activated gamma-phospho-Glu-tRNA(Gln). The polypeptide is Glutamyl-tRNA(Gln) amidotransferase subunit A (Cenarchaeum symbiosum (strain A)).